The chain runs to 104 residues: Elicitor peptide 6 (104 aa).

Positions 1 to 81 are excised as a propeptide; the sequence is MEVNGEEERR…TVEETGFMAR (81 aa). Low complexity predominate over residues 48–61; sequence SSSIPPSSSSSSPS. Positions 48 to 104 are disordered; the sequence is SSSIPPSSSSSSPSLVEEEDSGTETVEETGFMARITAVLRRRPRPPPYSSGRPGQNN. The segment covering 63–74 has biased composition (acidic residues); sequence VEEEDSGTETVE.

The protein belongs to the brassicaceae elicitor peptide family.

Functionally, elicitor of plant defense. The polypeptide is Elicitor peptide 6 (PEP6) (Arabidopsis thaliana (Mouse-ear cress)).